Here is a 210-residue protein sequence, read N- to C-terminus: Large ribosomal subunit protein bL25 (210 aa).

It belongs to the bacterial ribosomal protein bL25 family. CTC subfamily. In terms of assembly, part of the 50S ribosomal subunit; part of the 5S rRNA/L5/L18/L25 subcomplex. Contacts the 5S rRNA. Binds to the 5S rRNA independently of L5 and L18.

This is one of the proteins that binds to the 5S RNA in the ribosome where it forms part of the central protuberance. This chain is Large ribosomal subunit protein bL25, found in Herminiimonas arsenicoxydans.